The sequence spans 164 residues: MWKLVVVLTVNLLQGALTDVYVMKDVTLGFGQALEQCREESQLTEEKMEEFFHFWNDDFKFEHRELGCAIQCMSRHFNLLTDSSRMHHENTDKFIKSFPNGEILSQKMIDMIHTCEKTFDSEPDHCWRILRVAECFKDACNKSGLAPSMELILAEFIMESEADK.

An N-terminal signal peptide occupies residues 1-18 (MWKLVVVLTVNLLQGALT). Disulfide bonds link cysteine 37/cysteine 72, cysteine 68/cysteine 126, and cysteine 115/cysteine 135.

It belongs to the PBP/GOBP family. Homodimer. Antenna.

Functionally, present in the aqueous fluid surrounding olfactory sensory dendrites and are thought to aid in the capture and transport of hydrophobic odorants into and through this fluid. This is General odorant-binding protein 1 from Bombyx mori (Silk moth).